A 210-amino-acid polypeptide reads, in one-letter code: Glutathione S-transferase P (210 aa).

A GST N-terminal domain is found at 2–81 (PPYTIVYFPV…HLGRTLGLYG (80 aa)). A Phosphotyrosine; by EGFR modification is found at Tyr4. Glutathione contacts are provided by residues Tyr8, Arg14, Trp39, Lys45, and 52–53 (QL). A Phosphothreonine modification is found at Thr62. 65 to 66 (QS) contacts glutathione. The region spanning 83-204 (DQQEAALVDM…ASPEHMNRPI (122 aa)) is the GST C-terminal domain. Lys103 and Lys116 each carry N6-succinyllysine. Lys128 is subject to N6-acetyllysine.

This sequence belongs to the GST superfamily. Pi family. In terms of assembly, homodimer. Interacts with CDK5.

It localises to the cytoplasm. It is found in the mitochondrion. Its subcellular location is the nucleus. It catalyses the reaction RX + glutathione = an S-substituted glutathione + a halide anion + H(+). It carries out the reaction prostaglandin J2 + glutathione = prostaglandin J2-S-(R)-glutathione. The catalysed reaction is prostaglandin J2 + glutathione = prostaglandin J2-S-(S)-glutathione. The enzyme catalyses prostaglandin A2 + glutathione = prostaglandin A2-S-(S)-glutathione. It catalyses the reaction 11(S)-hydroxy-14(S),15(S)-epoxy-(5Z,8Z,12E)-eicosatrienoate + glutathione = (11S,15S)-dihydroxy-14(R)-S-glutathionyl-(5Z,8Z,12E)-eicosatrienoate. Functionally, conjugation of reduced glutathione to a wide number of exogenous and endogenous hydrophobic electrophiles. Involved in the formation of glutathione conjugates of both prostaglandin A2 (PGA2) and prostaglandin J2 (PGJ2). Participates in the formation of novel hepoxilin regioisomers. Negatively regulates CDK5 activity via p25/p35 translocation to prevent neurodegeneration. This Bos taurus (Bovine) protein is Glutathione S-transferase P (GSTP1).